Here is a 573-residue protein sequence, read N- to C-terminus: Putative ferric-chelate reductase 1 (573 aa).

A helical membrane pass occupies residues 4 to 24; the sequence is VCKSPQRLLFVLVSCFGLVQS. The region spanning 15–181 is the Reelin domain; that stretch reads LVSCFGLVQS…GTTGTSTTPA (167 aa). The region spanning 213–328 is the DOMON domain; the sequence is GCYFVAVQAS…NEYYLMIAAG (116 aa). N-linked (GlcNAc...) asparagine glycosylation is found at N286 and N300. In terms of domain architecture, Cytochrome b561 spans 332–532; sequence QGNIQFHTNK…YILQDLNLRA (201 aa). Residues 369–389 form a helical membrane-spanning segment; sequence AHGCLMLISWMATGSIGMIIA. Residues H370 and H411 each contribute to the heme b site. 2 helical membrane-spanning segments follow: residues 414–434 and 441–461; these read LMTL…VSAG and HPVL…VAAF. The heme b site is built by H441 and H477. 3 consecutive transmembrane segments (helical) span residues 479–499, 506–526, and 550–570; these read CNAF…LALF, GWML…YILQ, and ILLF…LVGI.

The protein belongs to the FRRS1 family. Requires heme b as cofactor.

The protein localises to the membrane. In terms of biological role, putative ferric-chelate reductases reduce Fe(3+) to Fe(2+) before its transport from the endosome to the cytoplasm. This chain is Putative ferric-chelate reductase 1 (frrs1), found in Danio rerio (Zebrafish).